A 514-amino-acid polypeptide reads, in one-letter code: ATP synthase subunit alpha (514 aa).

170-177 (GDRQIGKT) serves as a coordination point for ATP.

The protein belongs to the ATPase alpha/beta chains family. As to quaternary structure, F-type ATPases have 2 components, CF(1) - the catalytic core - and CF(0) - the membrane proton channel. CF(1) has five subunits: alpha(3), beta(3), gamma(1), delta(1), epsilon(1). CF(0) has three main subunits: a(1), b(2) and c(9-12). The alpha and beta chains form an alternating ring which encloses part of the gamma chain. CF(1) is attached to CF(0) by a central stalk formed by the gamma and epsilon chains, while a peripheral stalk is formed by the delta and b chains.

The protein localises to the cell inner membrane. It carries out the reaction ATP + H2O + 4 H(+)(in) = ADP + phosphate + 5 H(+)(out). In terms of biological role, produces ATP from ADP in the presence of a proton gradient across the membrane. The alpha chain is a regulatory subunit. This Pseudomonas putida (strain ATCC 700007 / DSM 6899 / JCM 31910 / BCRC 17059 / LMG 24140 / F1) protein is ATP synthase subunit alpha.